We begin with the raw amino-acid sequence, 207 residues long: Small ribosomal subunit protein uS4 (207 aa).

The interval K31–Q55 is disordered. Residues G42–G53 show a composition bias toward polar residues. The region spanning S97–L160 is the S4 RNA-binding domain.

Belongs to the universal ribosomal protein uS4 family. As to quaternary structure, part of the 30S ribosomal subunit. Contacts protein S5. The interaction surface between S4 and S5 is involved in control of translational fidelity.

One of the primary rRNA binding proteins, it binds directly to 16S rRNA where it nucleates assembly of the body of the 30S subunit. In terms of biological role, with S5 and S12 plays an important role in translational accuracy. In Paraburkholderia phymatum (strain DSM 17167 / CIP 108236 / LMG 21445 / STM815) (Burkholderia phymatum), this protein is Small ribosomal subunit protein uS4.